The primary structure comprises 201 residues: MSSKLERLSSSLQNILGAKVRSVVVDRGEVTLEVAAADYLAAAQMLRDHRDLRFEELIDLTGLDYSAYGNGAWTGKRFAVAVHLLSLTHNWRIRLRAFADDDAFPMFESLVGVWPGVNWYEREAFDLYGLMFAGHPDLRRILTDYGFVGHPFRKDFPVSGYVEMRYDPEQGRVVYQPVTIEPRENTPRIVREENYGDVGNG.

This sequence belongs to the complex I 30 kDa subunit family. In terms of assembly, NDH-1 is composed of 14 different subunits. Subunits NuoB, C, D, E, F, and G constitute the peripheral sector of the complex.

It localises to the cell inner membrane. It carries out the reaction a quinone + NADH + 5 H(+)(in) = a quinol + NAD(+) + 4 H(+)(out). NDH-1 shuttles electrons from NADH, via FMN and iron-sulfur (Fe-S) centers, to quinones in the respiratory chain. The immediate electron acceptor for the enzyme in this species is believed to be ubiquinone. Couples the redox reaction to proton translocation (for every two electrons transferred, four hydrogen ions are translocated across the cytoplasmic membrane), and thus conserves the redox energy in a proton gradient. The chain is NADH-quinone oxidoreductase subunit C from Aromatoleum aromaticum (strain DSM 19018 / LMG 30748 / EbN1) (Azoarcus sp. (strain EbN1)).